We begin with the raw amino-acid sequence, 142 residues long: Galactose-6-phosphate isomerase subunit LacA (142 aa).

It belongs to the LacAB/RpiB family. Heteromultimeric protein consisting of LacA and LacB.

It catalyses the reaction aldehydo-D-galactose 6-phosphate = keto-D-tagatose 6-phosphate. It functions in the pathway carbohydrate metabolism; D-galactose 6-phosphate degradation; D-tagatose 6-phosphate from D-galactose 6-phosphate: step 1/1. The sequence is that of Galactose-6-phosphate isomerase subunit LacA from Streptococcus mutans serotype c (strain ATCC 700610 / UA159).